The chain runs to 763 residues: MMDQARSAFSNLFGGEPLSYTRFSLARQVDGDNSHVEMKLAADEEENADNNMKASVRKPKRFNGRLCFAAIALVIFFLIGFMSGYLGYCKRVEQKEECVKLAETEETDKSETMETEDVPTSSRLYWADLKTLLSEKLNSIEFADTIKQLSQNTYTPREAGSQKDESLAYYIENQFHEFKFSKVWRDEHYVKIQVKSSIGQNMVTIVQSNGNLDPVESPEGYVAFSKPTEVSGKLVHANFGTKKDFEELSYSVNGSLVIVRAGEITFAEKVANAQSFNAIGVLIYMDKNKFPVVEADLALFGHAHLGTGDPYTPGFPSFNHTQFPPSQSSGLPNIPVQTISRAAAEKLFGKMEGSCPARWNIDSSCKLELSQNQNVKLIVKNVLKERRILNIFGVIKGYEEPDRYVVVGAQRDALGAGVAAKSSVGTGLLLKLAQVFSDMISKDGFRPSRSIIFASWTAGDFGAVGATEWLEGYLSSLHLKAFTYINLDKVVLGTSNFKVSASPLLYTLMGKIMQDVKHPVDGKSLYRDSNWISKVEKLSFDNAAYPFLAYSGIPAVSFCFCEDADYPYLGTRLDTYEALTQKVPQLNQMVRTAAEVAGQLIIKLTHDVELNLDYEMYNSKLLSFMKDLNQFKTDIRDMGLSLQWLYSARGDYFRATSRLTTDFHNAEKTNRFVMREINDRIMKVEYHFLSPYVSPRESPFRHIFWGSGSHTLSALVENLKLRQKNITAFNETLFRNQLALATWTIQGVANALSGDIWNIDNEF.

At 1–67 (MMDQARSAFS…KPKRFNGRLC (67 aa)) the chain is on the cytoplasmic side. Positions 1–67 (MMDQARSAFS…KPKRFNGRLC (67 aa)) are mediates interaction with SH3BP4. S10 and S19 each carry phosphoserine. A Phosphotyrosine modification is found at Y20. Positions 20–23 (YTRF) match the Endocytosis signal motif. Phosphothreonine is present on T21. Residue S24 is modified to Phosphoserine. A Stop-transfer sequence motif is present at residues 58–61 (KPKR). A lipid anchor (S-palmitoyl cysteine) is attached at C67. A helical; Signal-anchor for type II membrane protein transmembrane segment spans residues 68-88 (FAAIALVIFFLIGFMSGYLGY). Residues 89–763 (CKRVEQKEEC…GDIWNIDNEF (675 aa)) lie on the Extracellular side of the membrane. T104 carries O-linked (GalNAc...) threonine glycosylation. Positions 225-315 (SKPTEVSGKL…GTGDPYTPGF (91 aa)) constitute a PA domain. N-linked (GlcNAc...) asparagine glycans are attached at residues N253 and N319. The interval 572-763 (RLDTYEALTQ…GDIWNIDNEF (192 aa)) is ligand-binding. The Cell attachment site motif lies at 649-651 (RGD). N-linked (GlcNAc...) asparagine glycosylation is found at N725 and N730.

Belongs to the peptidase M28 family. M28B subfamily. Homodimer; disulfide-linked. Binds one transferrin molecule per subunit. Interacts with SH3BP4. Interacts with STEAP3; facilitates TFRC endocytosis in erythroid precursor cells. Stearoylated by ZDHHC6 which inhibits TFRC-mediated activation of the JNK pathway and promotes mitochondrial fragmentation. Stearoylation does not affect iron uptake. In terms of processing, N- and O-glycosylated, phosphorylated and palmitoylated.

It is found in the cell membrane. The protein localises to the melanosome. In terms of biological role, cellular uptake of iron occurs via receptor-mediated endocytosis of ligand-occupied transferrin receptor into specialized endosomes. Endosomal acidification leads to iron release. The apotransferrin-receptor complex is then recycled to the cell surface with a return to neutral pH and the concomitant loss of affinity of apotransferrin for its receptor. Transferrin receptor is necessary for development of erythrocytes and the nervous system. Upon stimulation, positively regulates T and B cell proliferation through iron uptake. Acts as a lipid sensor that regulates mitochondrial fusion by regulating activation of the JNK pathway. When dietary levels of stearate (C18:0) are low, promotes activation of the JNK pathway, resulting in HUWE1-mediated ubiquitination and subsequent degradation of the mitofusin MFN2 and inhibition of mitochondrial fusion. When dietary levels of stearate (C18:0) are high, TFRC stearoylation inhibits activation of the JNK pathway and thus degradation of the mitofusin MFN2. Mediates uptake of NICOL1 into fibroblasts where it may regulate extracellular matrix production. The protein is Transferrin receptor protein 1 (Tfrc) of Mus musculus (Mouse).